The following is a 173-amino-acid chain: Shikimate kinase 1 (173 aa).

14–19 contacts ATP; the sequence is GAGKST. Ser18 is a Mg(2+) binding site. The substrate site is built by Asp36, Arg60, and Gly82. Arg120 contacts ATP. Arg140 is a binding site for substrate. Gln157 lines the ATP pocket.

This sequence belongs to the shikimate kinase family. As to quaternary structure, monomer. Mg(2+) is required as a cofactor.

Its subcellular location is the cytoplasm. It carries out the reaction shikimate + ATP = 3-phosphoshikimate + ADP + H(+). It participates in metabolic intermediate biosynthesis; chorismate biosynthesis; chorismate from D-erythrose 4-phosphate and phosphoenolpyruvate: step 5/7. In terms of biological role, catalyzes the specific phosphorylation of the 3-hydroxyl group of shikimic acid using ATP as a cosubstrate. This Salmonella typhimurium (strain LT2 / SGSC1412 / ATCC 700720) protein is Shikimate kinase 1.